A 159-amino-acid chain; its full sequence is UPF0201 protein MK0399 (159 aa).

Belongs to the UPF0201 family.

This Methanopyrus kandleri (strain AV19 / DSM 6324 / JCM 9639 / NBRC 100938) protein is UPF0201 protein MK0399.